The following is a 208-amino-acid chain: Urease accessory protein UreG (208 aa).

10-17 (GPVGSGKT) provides a ligand contact to GTP.

Belongs to the SIMIBI class G3E GTPase family. UreG subfamily. Homodimer. UreD, UreF and UreG form a complex that acts as a GTP-hydrolysis-dependent molecular chaperone, activating the urease apoprotein by helping to assemble the nickel containing metallocenter of UreC. The UreE protein probably delivers the nickel.

The protein localises to the cytoplasm. Facilitates the functional incorporation of the urease nickel metallocenter. This process requires GTP hydrolysis, probably effectuated by UreG. This is Urease accessory protein UreG from Halalkalibacterium halodurans (strain ATCC BAA-125 / DSM 18197 / FERM 7344 / JCM 9153 / C-125) (Bacillus halodurans).